The chain runs to 446 residues: Maltoporin (446 aa).

Positions 1–25 are cleaved as a signal peptide; sequence MMTTLRKLPLAVAVAAGMMSVQAMA.

It belongs to the porin LamB (TC 1.B.3) family. In terms of assembly, homotrimer formed of three 18-stranded antiparallel beta-barrels, containing three independent channels.

It localises to the cell outer membrane. It carries out the reaction beta-maltose(in) = beta-maltose(out). Its function is as follows. Involved in the transport of maltose and maltodextrins. The sequence is that of Maltoporin from Escherichia fergusonii (strain ATCC 35469 / DSM 13698 / CCUG 18766 / IAM 14443 / JCM 21226 / LMG 7866 / NBRC 102419 / NCTC 12128 / CDC 0568-73).